The sequence spans 37 residues: Trypsin inhibitor 3 (37 aa).

3 disulfide bridges follow: cysteine 4–cysteine 21, cysteine 11–cysteine 25, and cysteine 20–cysteine 36.

Functionally, trypsin inhibitor. The chain is Trypsin inhibitor 3 from Spinacia oleracea (Spinach).